Reading from the N-terminus, the 323-residue chain is Ribokinase (323 aa).

Residues 26-28, 54-58, and Glu-155 each bind substrate; these read MTD and GKGAN. Residues Asn-200, 236-241, and Thr-257 each bind ATP; that span reads TLGASG. The K(+) site is built by Asp-264 and Thr-266. Residues 269–270 and Asn-296 contribute to the ATP site; that span reads GD. Asp-270 contributes to the substrate binding site. Residue Asp-270 is the Proton acceptor of the active site. Residues Ser-302, Ala-305, Gly-307, and Ser-311 each contribute to the K(+) site.

Belongs to the carbohydrate kinase PfkB family. Ribokinase subfamily. As to quaternary structure, homodimer. Requires Mg(2+) as cofactor.

It localises to the cytoplasm. Its subcellular location is the nucleus. It carries out the reaction D-ribose + ATP = D-ribose 5-phosphate + ADP + H(+). The protein operates within carbohydrate metabolism; D-ribose degradation; D-ribose 5-phosphate from beta-D-ribopyranose: step 2/2. With respect to regulation, activated by a monovalent cation that binds near, but not in, the active site. The most likely occupant of the site in vivo is potassium. Ion binding induces a conformational change that may alter substrate affinity. Competitively inhibited by phosphonoacetic acid, etidronate, 2-carboxethylphosphonic acid, N-(phosphonomethyl)glycine, N-(phosphonomethyl)iminodiacetic acid and clodronate. Functionally, catalyzes the phosphorylation of ribose at O-5 in a reaction requiring ATP and magnesium. The resulting D-ribose-5-phosphate can then be used either for sythesis of nucleotides, histidine, and tryptophan, or as a component of the pentose phosphate pathway. This chain is Ribokinase, found in Mus musculus (Mouse).